The chain runs to 120 residues: UPF0231 protein YacL (120 aa).

It belongs to the UPF0231 family.

The sequence is that of UPF0231 protein YacL from Escherichia coli O6:K15:H31 (strain 536 / UPEC).